The sequence spans 154 residues: Insulin-like growth factor 1 (154 aa).

The interval G50 to T78 is b. 3 disulfides stabilise this stretch: C55–C97, C67–C110, and C96–C101. Residues G79–T90 are c. Residues G91–A111 are a. Residues P112–A119 are d. The propeptide at R120–M154 is e peptide. The interval S121 to M154 is disordered. The span at R126 to L139 shows a compositional bias: basic and acidic residues. The segment covering K140 to M154 has biased composition (polar residues).

It belongs to the insulin family. In terms of assembly, forms a ternary complex with IGFR1 and ITGAV:ITGB3. Forms a ternary complex with IGFR1 and ITGA6:ITGB4. Forms a ternary complex with IGFBP3 and ALS.

The protein localises to the secreted. In terms of biological role, the insulin-like growth factors, isolated from plasma, are structurally and functionally related to insulin but have a much higher growth-promoting activity. May be a physiological regulator of [1-14C]-2-deoxy-D-glucose (2DG) transport and glycogen synthesis in osteoblasts. Stimulates glucose transport in bone-derived osteoblastic (PyMS) cells and is effective at much lower concentrations than insulin, not only regarding glycogen and DNA synthesis but also with regard to enhancing glucose uptake. May play a role in synapse maturation. Ca(2+)-dependent exocytosis of IGF1 is required for sensory perception of smell in the olfactory bulb. Acts as a ligand for IGF1R. Binds to the alpha subunit of IGF1R, leading to the activation of the intrinsic tyrosine kinase activity which autophosphorylates tyrosine residues in the beta subunit thus initiating a cascade of down-stream signaling events leading to activation of the PI3K-AKT/PKB and the Ras-MAPK pathways. Binds to integrins ITGAV:ITGB3 and ITGA6:ITGB4. Its binding to integrins and subsequent ternary complex formation with integrins and IGFR1 are essential for IGF1 signaling. Induces the phosphorylation and activation of IGFR1, MAPK3/ERK1, MAPK1/ERK2 and AKT1. As part of the MAPK/ERK signaling pathway, acts as a negative regulator of apoptosis in cardiomyocytes via promotion of STUB1/CHIP-mediated ubiquitination and degradation of ICER-type isoforms of CREM. The sequence is that of Insulin-like growth factor 1 from Bos taurus (Bovine).